The following is a 465-amino-acid chain: 2-methylcitrate synthase, mitochondrial (465 aa).

Residues 1 to 29 (MAMTMRSTRHASKLAQTARLALTNSRRYS) constitute a mitochondrion transit peptide. Arginine 74 and lysine 192 together coordinate CoA. Oxaloacetate is bound at residue histidine 269. Leucine 304 is a CoA binding site. Histidine 305 is a catalytic residue. Positions 346, 348, and 349 each coordinate CoA. Oxaloacetate is bound by residues histidine 351 and arginine 360. Histidine 351 is a catalytic residue. CoA is bound by residues threonine 400, lysine 401, and asparagine 406. Aspartate 408 is an active-site residue. Residues arginine 434 and arginine 454 each coordinate oxaloacetate.

This sequence belongs to the citrate synthase family. In terms of assembly, homodimer.

It is found in the mitochondrion matrix. The enzyme catalyses propanoyl-CoA + oxaloacetate + H2O = (2S,3S)-2-methylcitrate + CoA + H(+). The catalysed reaction is oxaloacetate + acetyl-CoA + H2O = citrate + CoA + H(+). It participates in organic acid metabolism; propanoate degradation. In terms of biological role, component of the methylcitrate cycle that catalyzes the synthesis of (2S,3S)-2-methylcitrate from propionyl-CoA and oxaloacetate. Plays an important role in detoxification of propionyl-CoA, an inhibitor of both primary and secondary metabolism. Also has citrate synthase activity using as substrates acetyl-CoA and oxaloacetate. Plays a key role in the estabishment of invasive pulmonary aspergillosis. The chain is 2-methylcitrate synthase, mitochondrial from Aspergillus fumigatus (strain CBS 144.89 / FGSC A1163 / CEA10) (Neosartorya fumigata).